The primary structure comprises 1293 residues: Enterobactin synthase component F (1293 aa).

An elongation/condensation region spans residues 1–301 (MSQHLPLVAA…NVLPLGIHIA (301 aa)). The adenylation stretch occupies residues 482-887 (SYREMREQVV…ALPDVEQAVT (406 aa)). The Carrier domain maps to 971-1046 (APKAGSETII…KLATIIDGEE (76 aa)). Serine 1006 carries the O-(pantetheine 4'-phosphoryl)serine modification. A thioesterase region spans residues 1066–1293 (PTLFCFHPAS…GPIIRATLNR (228 aa)). Histidine 1271 (proton acceptor; for thioesterase activity) is an active-site residue.

It belongs to the ATP-dependent AMP-binding enzyme family. EntF subfamily. Proteins EntB, EntD, EntE and EntF are the component of the enterobactin synthase. Components probably do not form a stable complex. EntF acts as a catalytic monomer. The cofactor is pantetheine 4'-phosphate. 4'-phosphopantetheine is transferred from CoA to a specific serine of apo-EntF by EntD. Holo-EntF so formed is then acylated with seryl-AMP.

The protein localises to the cytoplasm. The enzyme catalyses 3 2,3-dihydroxybenzoate + 3 L-serine + 6 ATP = enterobactin + 6 AMP + 6 diphosphate + 4 H(+). The catalysed reaction is holo-[peptidyl-carrier protein] + L-serine + ATP = L-seryl-[peptidyl-carrier protein] + AMP + diphosphate. The protein operates within siderophore biosynthesis; enterobactin biosynthesis. Functionally, involved in the biosynthesis of the siderophore enterobactin (enterochelin), which is a macrocyclic trimeric lactone of N-(2,3-dihydroxybenzoyl)-serine. EntF catalyzes the activation of L-serine via ATP-dependent PPi exchange reaction to form seryladenylate. Activated L-serine is loaded onto the peptidyl carrier domain via a thioester linkage to the phosphopanthetheine moiety, forming seryl-S-Ppant-EntF. EntF acts then as the sole catalyst for the formation of the three amide and three ester linkages found in enterobactin, using seryladenylate and 2,3-dihydroxybenzoate-S-Ppant-EntB (DHB-S-Ppant-EntB) as substrates, via the formation of a DHB-Ser-S-Ppant-EntF intermediate. The polypeptide is Enterobactin synthase component F (entF) (Escherichia coli O157:H7).